A 212-amino-acid polypeptide reads, in one-letter code: ATP-dependent dethiobiotin synthetase BioD (212 aa).

13 to 18 (GIGKTV) contacts ATP. Thr-17 serves as a coordination point for Mg(2+). Lys-33 is a catalytic residue. Substrate is bound at residue Ser-37. Glu-100 lines the Mg(2+) pocket. Residues 100-103 (EGAG) and 184-186 (PRL) contribute to the ATP site.

This sequence belongs to the dethiobiotin synthetase family. In terms of assembly, homodimer. The cofactor is Mg(2+).

It localises to the cytoplasm. The catalysed reaction is (7R,8S)-7,8-diammoniononanoate + CO2 + ATP = (4R,5S)-dethiobiotin + ADP + phosphate + 3 H(+). It functions in the pathway cofactor biosynthesis; biotin biosynthesis; biotin from 7,8-diaminononanoate: step 1/2. Catalyzes a mechanistically unusual reaction, the ATP-dependent insertion of CO2 between the N7 and N8 nitrogen atoms of 7,8-diaminopelargonic acid (DAPA, also called 7,8-diammoniononanoate) to form a ureido ring. The protein is ATP-dependent dethiobiotin synthetase BioD of Agrobacterium fabrum (strain C58 / ATCC 33970) (Agrobacterium tumefaciens (strain C58)).